The primary structure comprises 49 residues: Large ribosomal subunit protein eL40 (49 aa).

This sequence belongs to the eukaryotic ribosomal protein eL40 family.

In Haloquadratum walsbyi (strain DSM 16790 / HBSQ001), this protein is Large ribosomal subunit protein eL40.